The sequence spans 70 residues: Sec-independent protein translocase protein TatA (70 aa).

Residues 1–21 (MAIGVNQLLIILVIIVLLFGA) form a helical membrane-spanning segment.

The protein belongs to the TatA/E family. The Tat system comprises two distinct complexes: a TatABC complex, containing multiple copies of TatA, TatB and TatC subunits, and a separate TatA complex, containing only TatA subunits. Substrates initially bind to the TatABC complex, which probably triggers association of the separate TatA complex to form the active translocon.

Its subcellular location is the cell inner membrane. In terms of biological role, part of the twin-arginine translocation (Tat) system that transports large folded proteins containing a characteristic twin-arginine motif in their signal peptide across membranes. TatA could form the protein-conducting channel of the Tat system. This is Sec-independent protein translocase protein TatA from Campylobacter curvus (strain 525.92).